Consider the following 608-residue polypeptide: Auxin response factor 3 (608 aa).

The segment at 1 to 40 (MGGLIDLNVMETEEDETQTQTPSSASGSVSPTSSSSASVS) is disordered. A compositionally biased stretch (low complexity) spans 18-40 (QTQTPSSASGSVSPTSSSSASVS). The segment at residues 159–261 (FCKTLTASDT…KLRLGVRRAS (103 aa)) is a DNA-binding region (TF-B3).

The protein belongs to the ARF family. In terms of assembly, homo and heterodimers. In terms of tissue distribution, expressed in the whole plant.

It localises to the nucleus. Its function is as follows. Auxin response factors (ARFs) are transcriptional factors that bind specifically to the DNA sequence 5'-TGTCTC-3' found in the auxin-responsive promoter elements (AuxREs). Could act as transcriptional activator or repressor. Formation of heterodimers with Aux/IAA proteins may alter their ability to modulate early auxin response genes expression. Involved in the establishment or elaboration of tissue patterning during gynoecial development. This Arabidopsis thaliana (Mouse-ear cress) protein is Auxin response factor 3 (ARF3).